The sequence spans 67 residues: MGKIRQGFIKRVARELFNKYPNEFTRDFEHNKKKVEELTNVTSKKIRNRIAGYITKLVRMKEEGKIL.

This sequence belongs to the eukaryotic ribosomal protein eS17 family.

This chain is Small ribosomal subunit protein eS17, found in Pyrococcus abyssi (strain GE5 / Orsay).